Reading from the N-terminus, the 309-residue chain is Taste receptor type 2 member 46 (309 aa).

M1 is a topological domain (extracellular). The helical transmembrane segment at 2-22 (ITFLPIIFSILIVVTFVIGNF) threads the bilayer. At 23–46 (ANGFIALANSIEWFKRQKISFADQ) the chain is on the cytoplasmic side. The chain crosses the membrane as a helical span at residues 47 to 67 (ILTALAVSRVGLLWVLLLNWY). The Extracellular portion of the chain corresponds to 68-86 (ATELNPAFYSIEVRITAYN). The helical transmembrane segment at 87–107 (LWAVINHFSNWLATSLSIFYL) threads the bilayer. Over 108 to 126 (LKIANFSNLIFLCLKRRVK) the chain is Cytoplasmic. Residues 127–147 (SVVLVILLGPLLFLVCHLFVI) traverse the membrane as a helical segment. Residues 148–178 (NMNQIIWTKEYEGNMTWKIKLRSAMYLSNTT) are Extracellular-facing. N161 and N176 each carry an N-linked (GlcNAc...) asparagine glycan. A helical transmembrane segment spans residues 179–199 (VTILANLVPFTLTLISFLLLI). The Cytoplasmic segment spans residues 200 to 229 (CSLCKHLEKMQLHGKGSQDPSMKVHIKALQ). A helical transmembrane segment spans residues 230-250 (TVTSFLLLCAIYFLSIIMSVW). Residues 251-259 (SFESLENKP) are Extracellular-facing. A helical membrane pass occupies residues 260–280 (VFMFCEAITFSYPSTHPFILI). The Cytoplasmic portion of the chain corresponds to 281–309 (WGNKKLKQTFLSVLWHVRYWVKGEKPSXP).

The protein belongs to the G-protein coupled receptor T2R family.

It localises to the membrane. The protein localises to the cell projection. Its subcellular location is the cilium membrane. Functionally, receptor that may play a role in the perception of bitterness and is gustducin-linked. May play a role in sensing the chemical composition of the gastrointestinal content. The activity of this receptor may stimulate alpha gustducin, mediate PLC-beta-2 activation and lead to the gating of TRPM5. In airway epithelial cells, binding of bitter compounds increases the intracellular calcium ion concentration and stimulates ciliary beat frequency. The sequence is that of Taste receptor type 2 member 46 (TAS2R46) from Pan troglodytes (Chimpanzee).